The sequence spans 877 residues: Valine--tRNA ligase (877 aa).

A 'HIGH' region motif is present at residues 46-56 (PYPTGSIHMGH). The 'KMSKS' region signature appears at 529 to 533 (KMSKS). Lys532 is a binding site for ATP.

This sequence belongs to the class-I aminoacyl-tRNA synthetase family. ValS type 2 subfamily.

The protein localises to the cytoplasm. The catalysed reaction is tRNA(Val) + L-valine + ATP = L-valyl-tRNA(Val) + AMP + diphosphate. Catalyzes the attachment of valine to tRNA(Val). As ValRS can inadvertently accommodate and process structurally similar amino acids such as threonine, to avoid such errors, it has a 'posttransfer' editing activity that hydrolyzes mischarged Thr-tRNA(Val) in a tRNA-dependent manner. This chain is Valine--tRNA ligase, found in Methanothermobacter thermautotrophicus (strain ATCC 29096 / DSM 1053 / JCM 10044 / NBRC 100330 / Delta H) (Methanobacterium thermoautotrophicum).